The chain runs to 117 residues: Large ribosomal subunit protein uL18 (117 aa).

It belongs to the universal ribosomal protein uL18 family. In terms of assembly, part of the 50S ribosomal subunit; part of the 5S rRNA/L5/L18/L25 subcomplex. Contacts the 5S and 23S rRNAs.

This is one of the proteins that bind and probably mediate the attachment of the 5S RNA into the large ribosomal subunit, where it forms part of the central protuberance. This is Large ribosomal subunit protein uL18 from Proteus mirabilis (strain HI4320).